A 238-amino-acid polypeptide reads, in one-letter code: Small ribosomal subunit protein uS2 (238 aa).

Belongs to the universal ribosomal protein uS2 family.

The chain is Small ribosomal subunit protein uS2 from Synechococcus sp. (strain CC9311).